Reading from the N-terminus, the 314-residue chain is SERTA domain-containing protein 2 (314 aa).

The SERTA domain occupies 33–80; sequence YTLQRQTIFNISLMKLYNHRPLTEPSLQKTVLINNMLRRIQEELKQEG. Disordered stretches follow at residues 77-119 and 181-222; these read KQEG…HPCD and PTST…SKLM. The span at 87 to 97 shows a compositional bias: polar residues; sequence TPSSQPTTEPS. Low complexity predominate over residues 182-193; that stretch reads TSTSTEAATAAT. The span at 210 to 221 shows a compositional bias: basic and acidic residues; sequence GPQESRADDSKL. Residues 235–311 form a required for transactivation activity region; it reads TGFLTDLTLD…TELDHIMEVL (77 aa). The Nuclear export signal (NES) motif lies at 238–243; it reads LTDLTL.

In terms of assembly, interacts with XPO1; which mediates nuclear export. Interacts with TFDP1; modulates transactivation activity of TFDP1/E2F complexes. Post-translationally, polyubiquitinated, which promotes proteasomal degradation. As to expression, expressed in adipose tissue.

It localises to the nucleus. The protein localises to the cytoplasm. Its function is as follows. Acts at E2F-responsive promoters as coregulator to integrate signals provided by PHD- and/or bromodomain-containing transcription factors. May act as coactivator as well as corepressor of E2F1-TFDP1 and E2F4-TFDP1 complexes on E2F consensus binding sites, which would activate or inhibit E2F-target genes expression. Modulates fat storage by down-regulating the expression of key genes involved in adipocyte lipolysis, thermogenesis and oxidative metabolism. The polypeptide is SERTA domain-containing protein 2 (SERTAD2) (Homo sapiens (Human)).